The chain runs to 135 residues: MNSCKRFPRSARICLPSEYYVAFEQGRRYSSVLLRLHHLPTSGPVRLGLVVSRRVDIRAVNRNRIKRALREVMRQIAYKLVPGDYVVVVRQTAKDVSNAELSVALLSLLRRIGALPLASIDNAMLPFFERNCSRK.

Belongs to the RnpA family. As to quaternary structure, consists of a catalytic RNA component (M1 or rnpB) and a protein subunit.

It carries out the reaction Endonucleolytic cleavage of RNA, removing 5'-extranucleotides from tRNA precursor.. Its function is as follows. RNaseP catalyzes the removal of the 5'-leader sequence from pre-tRNA to produce the mature 5'-terminus. It can also cleave other RNA substrates such as 4.5S RNA. The protein component plays an auxiliary but essential role in vivo by binding to the 5'-leader sequence and broadening the substrate specificity of the ribozyme. The protein is Ribonuclease P protein component of Xylella fastidiosa (strain Temecula1 / ATCC 700964).